We begin with the raw amino-acid sequence, 420 residues long: Cysteate-C-fatty acyltransferase (420 aa).

Pyridoxal 5'-phosphate is bound by residues G114 to Y115, H219, T247, and A249. K250 carries the N6-(pyridoxal phosphate)lysine modification.

This sequence belongs to the class-II pyridoxal-phosphate-dependent aminotransferase family. The cofactor is pyridoxal 5'-phosphate.

It catalyses the reaction isopentadecanoyl-CoA + L-cysteate + H(+) = 3-oxocapnine + CO2 + CoA. It participates in lipid metabolism. In terms of biological role, transferase involved in the biosynthesis of capnine, a sulfonolipid present in the outer membrane of gliding Bacteroidetes and essential for gliding motility. Catalyzes the formation of 3-dehydrocapnine from cysteate and isopentadecanoyl-CoA (13-methyl-myristoyl-CoA). In vitro, products are also detected when 13-methyl-myristic acid is substituted with tridecylic acid, myristic acid, pentadecanoic acid or palmitic acid. This Capnocytophaga ochracea (strain ATCC 27872 / DSM 7271 / CCUG 9716 / JCM 12966 / NCTC 12371 / SS31 / VPI 2845) (Bacteroides ochraceus) protein is Cysteate-C-fatty acyltransferase.